The primary structure comprises 703 residues: MSLSRCPTDNSSSRINSSVPLINSSSPATPPESFDPQVFPSSLIHGDNLLPQDDQIASDPRSESNSCNGNTSSSLPCTDSYQYPLKHSCTPSFLRKFNESIENVSYKCLDHSPPDSVPGDFSISLVPQRNFLYSHSSLPPKIISIDRNNRIKLDNSISSNSDNFPPSPKVDTSNTVSPGSKPISEDLEDLNLQSIVQTFEDLPEGIQSYAFFQLLRSCNRQSMRLLLNECEPLLKKDILSNLPFSIVQSILLNLDIHSFLSCRLVSPTWNRILDVHTSYWKHMFSLFGFQINENDWKYANPNLNRPPFLHNDQISDDYFPEIFKRHFLNRKRWLFPSIPPSHLSFPIHVPNFMITSLLLHKDRIITTSGSGTIQIHNAITGVLEARLEGHKEGVWAVKIHENTLVSGSIDKTVRVWNIEKAKCTHIFRGHISIIRCLEILVPSRLIRHGVEIVEPDQPYIVSGSRDHTLRVWKLPKNTDPPYLPDNTNSIDRWEKNPYFVHTLIGHTDSVRTISGYGDILVSGSYDSSIRIWRVSTGECLYHLRGHSLRIYSVLYEPERNICISGSMDKSIRVWDLSTGTCKYVLEGHDAFVTLLNVFQNRLISGSADSTIRIWDLNTGKPLMVLPSNSGYISSFVSDEHKIISGNDGSVKLWDVRTGKLLRFLLTDLTKIWHVDFDAMRCVAAVQRDDQAYLEVINFSGSRP.

Polar residues-rich tracts occupy residues 1–27 (MSLS…SSSP), 63–73 (ESNSCNGNTSS), and 156–178 (SISS…TVSP). Disordered regions lie at residues 1-73 (MSLS…NTSS) and 156-180 (SISS…SPGS). An interaction with pop1 region spans residues 1 to 170 (MSLSRCPTDN…SDNFPPSPKV (170 aa)). The F-box domain maps to 236–283 (KDILSNLPFSIVQSILLNLDIHSFLSCRLVSPTWNRILDVHTSYWKHM). WD repeat units lie at residues 389-417 (GHKE…RVWN), 429-473 (GHIS…RVWK), 505-533 (GHTD…RIWR), 545-575 (GHSL…RVWD), 587-615 (GHDA…RIWD), and 625-654 (LPSN…KLWD).

In terms of assembly, homodimer and heterodimer with pop1. Binds to cul1, pip1 and phosphorylated cdc18.

It is found in the cytoplasm. Its subcellular location is the nucleus. Functionally, involved in maintenance of ploidy through proteasome dependent degradation of CDK inhibitor rum1 and S-phase initiator cdc18. Functions as a recognition factor for rum1 and cdc18, which are subsequently ubiquitinated and targeted to the 26S proteasome for degradation. Together with pop1, required for cig2 instability during G2 and M phase and cig2 degradation in exponentially growing cells. In Schizosaccharomyces pombe (strain 972 / ATCC 24843) (Fission yeast), this protein is WD repeat-containing protein pop2 (pop2).